A 235-amino-acid polypeptide reads, in one-letter code: 1-(5-phosphoribosyl)-5-[(5-phosphoribosylamino)methylideneamino] imidazole-4-carboxamide isomerase (235 aa).

The active-site Proton acceptor is Asp8. Asp128 acts as the Proton donor in catalysis.

The protein belongs to the HisA/HisF family.

It localises to the cytoplasm. It carries out the reaction 1-(5-phospho-beta-D-ribosyl)-5-[(5-phospho-beta-D-ribosylamino)methylideneamino]imidazole-4-carboxamide = 5-[(5-phospho-1-deoxy-D-ribulos-1-ylimino)methylamino]-1-(5-phospho-beta-D-ribosyl)imidazole-4-carboxamide. It functions in the pathway amino-acid biosynthesis; L-histidine biosynthesis; L-histidine from 5-phospho-alpha-D-ribose 1-diphosphate: step 4/9. The chain is 1-(5-phosphoribosyl)-5-[(5-phosphoribosylamino)methylideneamino] imidazole-4-carboxamide isomerase from Thermus thermophilus (strain ATCC BAA-163 / DSM 7039 / HB27).